We begin with the raw amino-acid sequence, 283 residues long: 4-hydroxybenzoate octaprenyltransferase (283 aa).

Helical transmembrane passes span 16–36 (PIGT…AGAG), 40–60 (LRIV…GCVI), 85–105 (ISAT…FGLV), 108–128 (LNTE…LYPF), 135–155 (LPQI…FTAL), 160–180 (WFIA…YDTE), 204–224 (FDRL…GWIL), 226–246 (LITV…LFAY), and 263–283 (FLHN…HYWF).

This sequence belongs to the UbiA prenyltransferase family. The cofactor is Mg(2+).

Its subcellular location is the cell inner membrane. The catalysed reaction is all-trans-octaprenyl diphosphate + 4-hydroxybenzoate = 4-hydroxy-3-(all-trans-octaprenyl)benzoate + diphosphate. Its pathway is cofactor biosynthesis; ubiquinone biosynthesis. Catalyzes the prenylation of para-hydroxybenzoate (PHB) with an all-trans polyprenyl group. Mediates the second step in the final reaction sequence of ubiquinone-8 (UQ-8) biosynthesis, which is the condensation of the polyisoprenoid side chain with PHB, generating the first membrane-bound Q intermediate 3-octaprenyl-4-hydroxybenzoate. This is 4-hydroxybenzoate octaprenyltransferase from Idiomarina loihiensis (strain ATCC BAA-735 / DSM 15497 / L2-TR).